The sequence spans 117 residues: Conotoxin vil14.2 (117 aa).

The first 22 residues, 1-22, serve as a signal peptide directing secretion; sequence MGFRVLVLVVMATTFALPFTFF. Residues 23 to 90 constitute a propeptide that is removed on maturation; that stretch reads EEPGRSPFRP…FAELSVGQRR (68 aa). Residues 53–77 form a disordered region; sequence RADGQPPDMRQPEMRRPEMRRPEVR. The segment covering 62 to 77 has biased composition (basic and acidic residues); that stretch reads RQPEMRRPEMRRPEVR. 2 cysteine pairs are disulfide-bonded: cysteine 96–cysteine 116 and cysteine 100–cysteine 112.

Belongs to the conotoxin R superfamily. As to expression, expressed by the venom duct.

The protein resides in the secreted. This chain is Conotoxin vil14.2, found in Conus villepinii (Villepin's cone).